The primary structure comprises 87 residues: MIRFVLFISCFFLIGTVVECNKDGYLMEGDGCKMGCLTRKASYCVDQCKEVGGKDGYCYAWLSCYCYNMPDSVEIWDSKNNKCGKGK.

The first 20 residues, 1 to 20 (MIRFVLFISCFFLIGTVVEC), serve as a signal peptide directing secretion. The region spanning 22 to 84 (KDGYLMEGDG…IWDSKNNKCG (63 aa)) is the LCN-type CS-alpha/beta domain. Intrachain disulfides connect Cys-32–Cys-83, Cys-36–Cys-58, Cys-44–Cys-64, and Cys-48–Cys-66. Lys-85 is subject to Lysine amide.

As to expression, expressed by the venom gland.

It is found in the secreted. Its function is as follows. Alpha toxins bind voltage-independently at site-3 of sodium channels (Nav) and inhibit the inactivation of the activated channels, thereby blocking neuronal transmission. Affects the tetrodotoxin-sensitive sodium current permeability of F-11 rat neuroblastoma cells. Produces a dose dependent increase in amplitude and duration of the current. This is Alpha-toxin To2 from Tityus obscurus (Amazonian scorpion).